A 479-amino-acid chain; its full sequence is Aspartyl/glutamyl-tRNA(Asn/Gln) amidotransferase subunit B (479 aa).

It belongs to the GatB/GatE family. GatB subfamily. As to quaternary structure, heterotrimer of A, B and C subunits.

It catalyses the reaction L-glutamyl-tRNA(Gln) + L-glutamine + ATP + H2O = L-glutaminyl-tRNA(Gln) + L-glutamate + ADP + phosphate + H(+). The enzyme catalyses L-aspartyl-tRNA(Asn) + L-glutamine + ATP + H2O = L-asparaginyl-tRNA(Asn) + L-glutamate + ADP + phosphate + 2 H(+). Its function is as follows. Allows the formation of correctly charged Asn-tRNA(Asn) or Gln-tRNA(Gln) through the transamidation of misacylated Asp-tRNA(Asn) or Glu-tRNA(Gln) in organisms which lack either or both of asparaginyl-tRNA or glutaminyl-tRNA synthetases. The reaction takes place in the presence of glutamine and ATP through an activated phospho-Asp-tRNA(Asn) or phospho-Glu-tRNA(Gln). The polypeptide is Aspartyl/glutamyl-tRNA(Asn/Gln) amidotransferase subunit B (Streptococcus pyogenes serotype M4 (strain MGAS10750)).